The following is a 334-amino-acid chain: Fructose-1,6-bisphosphatase class 1 (334 aa).

Glu89, Asp112, Leu114, and Asp115 together coordinate Mg(2+). Residues 115 to 118, Asn208, Tyr241, and Lys271 contribute to the substrate site; that span reads DGSS. Glu277 contacts Mg(2+).

This sequence belongs to the FBPase class 1 family. In terms of assembly, homotetramer. Mg(2+) is required as a cofactor.

It localises to the cytoplasm. The catalysed reaction is beta-D-fructose 1,6-bisphosphate + H2O = beta-D-fructose 6-phosphate + phosphate. Its pathway is carbohydrate biosynthesis; gluconeogenesis. In Photorhabdus laumondii subsp. laumondii (strain DSM 15139 / CIP 105565 / TT01) (Photorhabdus luminescens subsp. laumondii), this protein is Fructose-1,6-bisphosphatase class 1.